Reading from the N-terminus, the 360-residue chain is uncharacterized protein (360 aa).

It to P.multocida PM1082.

This is an uncharacterized protein from Pasteurella multocida (strain Pm70).